The sequence spans 69 residues: DNA-directed RNA polymerase subunit epsilon (69 aa).

The protein belongs to the RNA polymerase subunit epsilon family. As to quaternary structure, RNAP is composed of a core of 2 alpha, a beta and a beta' subunit. The core is associated with a delta subunit, and at least one of epsilon or omega. When a sigma factor is associated with the core the holoenzyme is formed, which can initiate transcription.

It catalyses the reaction RNA(n) + a ribonucleoside 5'-triphosphate = RNA(n+1) + diphosphate. Functionally, a non-essential component of RNA polymerase (RNAP). This chain is DNA-directed RNA polymerase subunit epsilon, found in Listeria monocytogenes serotype 4b (strain CLIP80459).